Here is a 367-residue protein sequence, read N- to C-terminus: Heme A synthase (367 aa).

Transmembrane regions (helical) follow at residues 25-45 (ALRF…LVGG), 111-131 (LIAR…WLTG), 139-159 (WPLV…WWMV), 174-194 (LATH…IMRG), and 210-230 (GFAA…ALVA). Heme is bound at residue His-274. 3 consecutive transmembrane segments (helical) span residues 276–296 (IGAY…LRAA), 305–325 (AILL…TLLM), and 327–347 (VPLH…GFAV). His-335 provides a ligand contact to heme.

The protein belongs to the COX15/CtaA family. Type 2 subfamily. As to quaternary structure, interacts with CtaB. Heme b serves as cofactor.

It is found in the cell membrane. It catalyses the reaction Fe(II)-heme o + 2 A + H2O = Fe(II)-heme a + 2 AH2. The protein operates within porphyrin-containing compound metabolism; heme A biosynthesis; heme A from heme O: step 1/1. Functionally, catalyzes the conversion of heme O to heme A by two successive hydroxylations of the methyl group at C8. The first hydroxylation forms heme I, the second hydroxylation results in an unstable dihydroxymethyl group, which spontaneously dehydrates, resulting in the formyl group of heme A. This is Heme A synthase from Rhizobium johnstonii (strain DSM 114642 / LMG 32736 / 3841) (Rhizobium leguminosarum bv. viciae).